The sequence spans 283 residues: Putative cytochrome b-c1 complex subunit Rieske-like protein 1 (283 aa).

Residues 116–149 (TEARKGFSYLVTGVTTVGVAYAAKNAVTQFVSSM) traverse the membrane as a helical segment. Residues 196–281 (EAAVELSQLR…YEFTSDDMVI (86 aa)) enclose the Rieske domain. Residues cysteine 226, histidine 228, cysteine 245, and histidine 248 each coordinate [2Fe-2S] cluster. A disulfide bridge links cysteine 231 with cysteine 247.

This sequence belongs to the Rieske iron-sulfur protein family. It depends on [2Fe-2S] cluster as a cofactor.

It is found in the membrane. This Homo sapiens (Human) protein is Putative cytochrome b-c1 complex subunit Rieske-like protein 1 (UQCRFS1P1).